The primary structure comprises 84 residues: Cytochrome c oxidase subunit 12, mitochondrial (84 aa).

In terms of domain architecture, CHCH spans 27-70; it reads TKHCWQNYVDYHKCILAKGEDFAPCRQFWLAYRSLCPSGWYQRW. Positions 30 to 40 match the Cx9C motif motif; the sequence is CWQNYVDYHKC. Disulfide bonds link C30-C62 and C40-C51. Positions 51 to 62 match the Cx10C motif motif; that stretch reads CRQFWLAYRSLC.

The protein belongs to the cytochrome c oxidase subunit 6B family. In terms of assembly, component of the cytochrome c oxidase (complex IV, CIV), a multisubunit enzyme composed of 11 subunits. The complex is composed of a catalytic core of 3 subunits Cox1, Cox2 and Cox3, encoded in the mitochondrial DNA, and 8 supernumerary subunits Cox4, Cox5a/Cox5, Cox6, Cox7, Cox8, Cox7a/Cox9, Cox6b/Cox12 and Cox6a/Cox13, which are encoded in the nuclear genome. The complex exists as a monomer or a dimer and forms respiratory supercomplexes (SCs) in the inner mitochondrial membrane with NADH-ubiquinone oxidoreductase (complex I, CI) and ubiquinol-cytochrome c oxidoreductase (cytochrome b-c1 complex, complex III, CIII), resulting in various different assemblies (supercomplexes I(1)IV(1), I(1)III(3)IV(2), III(2)IV(1) and III(2)IV(2) as well as larger supercomplexes of compositions like I(1)III(2)IV(5-6)).

The protein localises to the mitochondrion inner membrane. Its pathway is energy metabolism; oxidative phosphorylation. In terms of biological role, component of the cytochrome c oxidase, the last enzyme in the mitochondrial electron transport chain which drives oxidative phosphorylation. The respiratory chain contains 3 multisubunit complexes succinate dehydrogenase (complex II, CII), ubiquinol-cytochrome c oxidoreductase (cytochrome b-c1 complex, complex III, CIII) and cytochrome c oxidase (complex IV, CIV), that cooperate to transfer electrons derived from NADH and succinate to molecular oxygen, creating an electrochemical gradient over the inner membrane that drives transmembrane transport and the ATP synthase. Cytochrome c oxidase is the component of the respiratory chain that catalyzes the reduction of oxygen to water. Electrons originating from reduced cytochrome c in the intermembrane space (IMS) are transferred via the dinuclear copper A center (CU(A)) of Cox2 and heme A of Cox1 to the active site in Cox1, a binuclear center (BNC) formed by heme A3 and copper B (CU(B)). The BNC reduces molecular oxygen to 2 water molecules using 4 electrons from cytochrome c in the IMS and 4 protons from the mitochondrial matrix. This chain is Cytochrome c oxidase subunit 12, mitochondrial (cox-13), found in Neurospora crassa (strain ATCC 24698 / 74-OR23-1A / CBS 708.71 / DSM 1257 / FGSC 987).